The chain runs to 246 residues: MTQSTRILLGVNIDHVATLRQARGTRYPDPVKAALDAEEAGADGITVHLREDRRHIQERDVLLLKDVLQTRMNFEMGVTEEMLAFAERIRPAHICLVPETRQELTTEGGLDVAGQEARIKAAVERLAKIGCEVSLFIDADERQIAASKRVGAPAVELHTGRYADAQTPTEVAEELQRVADGVAFGLAQGLIVNAGHGLHYHNVEAVAAIKGINELNIGHALVAHALFVGFKAAVAEMKALIVAAAR.

Residue asparagine 12 participates in 3-amino-2-oxopropyl phosphate binding. Aspartate 14–histidine 15 serves as a coordination point for 1-deoxy-D-xylulose 5-phosphate. Arginine 23 is a 3-amino-2-oxopropyl phosphate binding site. The active-site Proton acceptor is the histidine 48. 1-deoxy-D-xylulose 5-phosphate contacts are provided by arginine 50 and histidine 55. Glutamate 75 (proton acceptor) is an active-site residue. Threonine 105 is a binding site for 1-deoxy-D-xylulose 5-phosphate. Catalysis depends on histidine 196, which acts as the Proton donor. Residues glycine 197 and glycine 218–histidine 219 contribute to the 3-amino-2-oxopropyl phosphate site.

It belongs to the PNP synthase family. As to quaternary structure, homooctamer; tetramer of dimers.

The protein resides in the cytoplasm. It carries out the reaction 3-amino-2-oxopropyl phosphate + 1-deoxy-D-xylulose 5-phosphate = pyridoxine 5'-phosphate + phosphate + 2 H2O + H(+). The protein operates within cofactor biosynthesis; pyridoxine 5'-phosphate biosynthesis; pyridoxine 5'-phosphate from D-erythrose 4-phosphate: step 5/5. Catalyzes the complicated ring closure reaction between the two acyclic compounds 1-deoxy-D-xylulose-5-phosphate (DXP) and 3-amino-2-oxopropyl phosphate (1-amino-acetone-3-phosphate or AAP) to form pyridoxine 5'-phosphate (PNP) and inorganic phosphate. The sequence is that of Pyridoxine 5'-phosphate synthase from Pseudomonas syringae pv. tomato (strain ATCC BAA-871 / DC3000).